We begin with the raw amino-acid sequence, 284 residues long: Transmembrane protein 163b (284 aa).

The segment at 1-44 (MTDSSSASDPTAGPVDPGPAPSAPDPALEDPASTPANGHHPNQA) is disordered. Topologically, residues 1–83 (MTDSSSASDP…HEAQSYRKKA (83 aa)) are cytoplasmic. The helical transmembrane segment at 84-104 (LWVSWVSIVVTMILAIAAFTV) threads the bilayer. Residues 105–111 (SIMRHSA) lie on the Extracellular side of the membrane. Residues 112 to 132 (SAFGFAFDATLDVLSSIIVLW) form a helical membrane-spanning segment. Topologically, residues 133–145 (RYSNAAAVHSAHR) are cytoplasmic. Residues 146 to 166 (EYIACVILGVVFILSAITILV) form a helical membrane-spanning segment. At 167–182 (KAIHDLATKLEPEVDD) the chain is on the extracellular side. Residues 183–203 (FLYSVSVISGVVCTVLCVCKF) form a helical membrane-spanning segment. The Cytoplasmic portion of the chain corresponds to 204–212 (MLGKVLTSR). The helical transmembrane segment at 213–233 (ALITDGFNSLVGGVMGFSILI) threads the bilayer. Over 234-243 (SAEVFKHEPS) the chain is Extracellular. The chain crosses the membrane as a helical span at residues 244–264 (VWFLDGTIGILIGLIILAYGV). The Cytoplasmic portion of the chain corresponds to 265–284 (KLLKDMVPRIRQTRHYERFE).

This sequence belongs to the TMEM163 family.

It localises to the cytoplasmic vesicle. It is found in the secretory vesicle. The protein resides in the synaptic vesicle membrane. Its subcellular location is the early endosome membrane. The protein localises to the late endosome membrane. It localises to the lysosome membrane. It is found in the cell membrane. It catalyses the reaction Zn(2+)(in) = Zn(2+)(out). Zinc ion transporter that mediates zinc efflux and plays a crucial role in intracellular zinc homeostasis. Binds the divalent cations Zn(2+), Ni(2+), and to a minor extent Cu(2+). Is a functional modulator of P2X purinoceptors, including P2RX1, P2RX3, P2RX4 and P2RX7. Plays a role in central nervous system development and is required for myelination, and survival and proliferation of oligodendrocytes. The polypeptide is Transmembrane protein 163b (Danio rerio (Zebrafish)).